A 117-amino-acid chain; its full sequence is Cuticular protein 47Eg (117 aa).

The N-terminal stretch at 1 to 16 is a signal peptide; it reads MKFFIAFACLLAVALA. In terms of domain architecture, Chitin-binding type R&amp;R spans 31-97; that stretch reads VDGFAYAVEL…SANPPLPTPP (67 aa).

Functionally, component of the larval cuticle. This is Cuticular protein 47Eg (Cpr47Eg) from Drosophila melanogaster (Fruit fly).